Reading from the N-terminus, the 132-residue chain is ATP synthase epsilon chain (132 aa).

The protein belongs to the ATPase epsilon chain family. As to quaternary structure, F-type ATPases have 2 components, CF(1) - the catalytic core - and CF(0) - the membrane proton channel. CF(1) has five subunits: alpha(3), beta(3), gamma(1), delta(1), epsilon(1). CF(0) has three main subunits: a, b and c.

It localises to the cell inner membrane. Functionally, produces ATP from ADP in the presence of a proton gradient across the membrane. The protein is ATP synthase epsilon chain of Anaeromyxobacter dehalogenans (strain 2CP-1 / ATCC BAA-258).